Reading from the N-terminus, the 1147-residue chain is GPI inositol-deacylase (1147 aa).

A disordered region spans residues 1-94 (MRRHSSGSSE…RTSPSSPLGL (94 aa)). A glycan (N-linked (GlcNAc...) asparagine) is linked at asparagine 23. Positions 28–49 (SAKDSRSSAHPTTKLDHNRNAD) are enriched in basic and acidic residues. Over residues 50-63 (RPPSFSISRRSSSI) the composition is skewed to low complexity. Asparagine 74 carries N-linked (GlcNAc...) asparagine glycosylation. A helical transmembrane segment spans residues 127-147 (AITFSALVAAIVGIGFLVAVL). Serine 310 is an active-site residue. A run of 2 helical transmembrane segments spans residues 795 to 815 (LYMR…ALVL) and 843 to 863 (IPLM…MAPA). N-linked (GlcNAc...) asparagine glycosylation is found at asparagine 865 and asparagine 873. Helical transmembrane passes span 893–913 (PLFL…CTVF), 918–938 (LTLT…PGWI), and 965–985 (VLLL…VACL). N-linked (GlcNAc...) asparagine glycosylation is present at asparagine 1011. The next 3 helical transmembrane spans lie at 1015–1035 (SIFI…VVWV), 1052–1072 (VLSV…KMIP), and 1084–1104 (LLLF…AYTL).

The protein belongs to the GPI inositol-deacylase family.

It is found in the endoplasmic reticulum membrane. Functionally, involved in inositol deacylation of GPI-anchored proteins which plays important roles in the quality control and ER-associated degradation of GPI-anchored proteins. The polypeptide is GPI inositol-deacylase (BST1) (Chaetomium globosum (strain ATCC 6205 / CBS 148.51 / DSM 1962 / NBRC 6347 / NRRL 1970) (Soil fungus)).